The sequence spans 512 residues: Sodium/proline symporter (512 aa).

13 helical membrane passes run 16–36 (WQTY…GFYG), 54–74 (IGPY…WMIM), 85–105 (LSAM…YFVV), 139–159 (IISG…GFVS), 174–194 (FGLI…GYLA), 200–220 (FFQG…AMMN), 240–260 (LFKG…LGYF), 286–306 (ISWM…GIAF), 327–347 (VLFH…AIMS), 381–401 (FVMI…AIAW), 410–430 (LVGN…LFAL), 438–458 (AGAV…IAWI), and 467–487 (IFGL…TYVV).

The protein belongs to the sodium:solute symporter (SSF) (TC 2.A.21) family.

It is found in the cell membrane. It catalyses the reaction L-proline(in) + Na(+)(in) = L-proline(out) + Na(+)(out). Its function is as follows. Catalyzes the sodium-dependent uptake of extracellular L-proline. Since most S.aureus strains are L-proline auxotrophs, this transporter may aid the bacterial persistence during an infection of tissues with low proline concentrations. In Staphylococcus aureus (strain bovine RF122 / ET3-1), this protein is Sodium/proline symporter (putP).